The following is a 363-amino-acid chain: Aminomethyltransferase (363 aa).

Belongs to the GcvT family. In terms of assembly, the glycine cleavage system is composed of four proteins: P, T, L and H.

The catalysed reaction is N(6)-[(R)-S(8)-aminomethyldihydrolipoyl]-L-lysyl-[protein] + (6S)-5,6,7,8-tetrahydrofolate = N(6)-[(R)-dihydrolipoyl]-L-lysyl-[protein] + (6R)-5,10-methylene-5,6,7,8-tetrahydrofolate + NH4(+). In terms of biological role, the glycine cleavage system catalyzes the degradation of glycine. In Staphylococcus aureus (strain bovine RF122 / ET3-1), this protein is Aminomethyltransferase.